The sequence spans 115 residues: Insulin-like peptide IlO1_i1 (115 aa).

Positions 1 to 20 (MFVYTTIMLLLLAEINHSQG) are cleaved as a signal peptide. Cystine bridges form between Cys40/Cys101, Cys52/Cys114, and Cys100/Cys105. Residues 59–93 (RRNRITGLDQRSIFESNLLAKRFLISRRQIVNNRR) constitute a propeptide, c peptide.

Belongs to the insulin family. As to expression, expressed in tentacles.

It localises to the secreted. In terms of biological role, heterodimer with unknown function. Surprisingly, the truncated synthetic analog (dimer of 27-58 and 94-115) does not bind to long insulin receptor (HIR-B) and insulin-like growth factor 1 receptor. This truncated synthetic analog shows very weak inhibitory activity on different voltage-gated channels. This chain is Insulin-like peptide IlO1_i1, found in Oulactis sp. (Sea anemone).